A 221-amino-acid polypeptide reads, in one-letter code: Endonuclease V (221 aa).

Residues aspartate 44 and aspartate 112 each contribute to the Mg(2+) site.

Belongs to the endonuclease V family. Mg(2+) is required as a cofactor.

It is found in the cytoplasm. The catalysed reaction is Endonucleolytic cleavage at apurinic or apyrimidinic sites to products with a 5'-phosphate.. Its function is as follows. DNA repair enzyme involved in the repair of deaminated bases. Selectively cleaves double-stranded DNA at the second phosphodiester bond 3' to a deoxyinosine leaving behind the intact lesion on the nicked DNA. The chain is Endonuclease V from Nostoc sp. (strain PCC 7120 / SAG 25.82 / UTEX 2576).